A 228-amino-acid chain; its full sequence is Ribonuclease 3 (228 aa).

In terms of domain architecture, RNase III spans 5-127; it reads KDALQDRLGY…LFGAIYLDGG (123 aa). Glu-40 serves as a coordination point for Mg(2+). Residue Asp-44 is part of the active site. Mg(2+) is bound by residues Asp-113 and Glu-116. Residue Glu-116 is part of the active site. The region spanning 154-224 is the DRBM domain; it reads DPKTRLQEHL…AEQMLKRLED (71 aa). Residues 200 to 228 are disordered; the sequence is AEGEAGSRRKAEQQAAEQMLKRLEDKHER. The span at 218-228 shows a compositional bias: basic and acidic residues; sequence MLKRLEDKHER.

It belongs to the ribonuclease III family. Homodimer. It depends on Mg(2+) as a cofactor.

Its subcellular location is the cytoplasm. The catalysed reaction is Endonucleolytic cleavage to 5'-phosphomonoester.. Digests double-stranded RNA. Involved in the processing of primary rRNA transcript to yield the immediate precursors to the large and small rRNAs (23S and 16S). Processes some mRNAs, and tRNAs when they are encoded in the rRNA operon. Processes pre-crRNA and tracrRNA of type II CRISPR loci if present in the organism. The chain is Ribonuclease 3 from Alkalilimnicola ehrlichii (strain ATCC BAA-1101 / DSM 17681 / MLHE-1).